The sequence spans 127 residues: Phosphoribosyl-ATP pyrophosphatase (127 aa).

It belongs to the PRA-PH family.

Its subcellular location is the cytoplasm. The catalysed reaction is 1-(5-phospho-beta-D-ribosyl)-ATP + H2O = 1-(5-phospho-beta-D-ribosyl)-5'-AMP + diphosphate + H(+). Its pathway is amino-acid biosynthesis; L-histidine biosynthesis; L-histidine from 5-phospho-alpha-D-ribose 1-diphosphate: step 2/9. The polypeptide is Phosphoribosyl-ATP pyrophosphatase (Polaromonas sp. (strain JS666 / ATCC BAA-500)).